Here is a 510-residue protein sequence, read N- to C-terminus: Putative serine protease K12H4.7 (510 aa).

The signal sequence occupies residues 1 to 19 (MKTLLAVLLAACVLTQVLS). Catalysis depends on serine 187, which acts as the Charge relay system. An N-linked (GlcNAc...) asparagine glycan is attached at asparagine 234. Aspartate 452 (charge relay system) is an active-site residue. Residue asparagine 473 is glycosylated (N-linked (GlcNAc...) asparagine). Histidine 477 acts as the Charge relay system in catalysis.

This sequence belongs to the peptidase S28 family.

This Caenorhabditis elegans protein is Putative serine protease K12H4.7.